The primary structure comprises 389 residues: NAD-dependent protein deacetylase sirtuin-2 (389 aa).

Residues 1 to 34 are disordered; it reads MAEPDPSHPLETQAGKVQEAQDSDSDSEGGAAGG. Ala-2 carries the post-translational modification N-acetylalanine. Ser-23, Ser-25, and Ser-27 each carry phosphoserine. The Nuclear export signal signature appears at 41–51; that stretch reads LRNLFSQTLSL. The residue at position 53 (Ser-53) is a Phosphoserine. The region spanning 57–338 is the Deacetylase sirtuin-type domain; it reads RLLDELTLEG…LALAELLGWK (282 aa). NAD(+) contacts are provided by residues 85 to 89 and 95 to 97; these read AGIST and DFR. Phosphoserine is present on Ser-100. 167–170 contributes to the NAD(+) binding site; it reads QNID. His-187 functions as the Proton acceptor in the catalytic mechanism. Positions 195 and 200 each coordinate Zn(2+). Ser-207 carries the phosphoserine modification. Zn(2+) contacts are provided by Cys-221 and Cys-224. NAD(+) is bound by residues 262–263, 286–288, and Cys-324; these read TS and NKE. A disordered region spans residues 351–389; sequence SIDAQSGAGVPNPSTSASPKKSPPPAKDEARTTEREKPQ. A compositionally biased stretch (low complexity) spans 361-370; it reads PNPSTSASPK. Ser-368 carries the post-translational modification Phosphoserine; by CDK2 and CDK5. The residue at position 372 (Ser-372) is a Phosphoserine. A compositionally biased stretch (basic and acidic residues) spans 376–389; it reads AKDEARTTEREKPQ.

Belongs to the sirtuin family. Class I subfamily. In terms of assembly, interacts with CDC20, FOXO3 and FZR1. Associates with microtubules in primary cortical mature neurons. Homotrimer. Isoform 1 and isoform 2 interact (via both phosphorylated, unphosphorylated, active or inactive forms) with HDAC6; the interaction is necessary for the complex to interact with alpha-tubulin, suggesting that these proteins belong to a large complex that deacetylates the cytoskeleton. Interacts with FOXO1; the interaction is disrupted upon serum-starvation or oxidative stress, leading to increased level of acetylated FOXO1 and induction of autophagy. Interacts with RELA; the interaction occurs in the cytoplasm and is increased in a TNF-alpha-dependent manner. Interacts with HOXA10; the interaction is direct. Interacts with YWHAB and YWHAG; the interactions occur in a AKT-dependent manner and increase SIRT2-dependent TP53 deacetylation. Interacts with MAPK1/ERK2 and MAPK3/ERK1; the interactions increase SIRT2 stability and deacetylation activity. Interacts (phosphorylated form) with KMT5A isoform 2; the interaction is direct, stimulates KMT5A-mediated methyltransferase activity on histone at 'Lys-20' (H4K20me1) and is increased in a H(2)O(2)-induced oxidative stress-dependent manner. Interacts with G6PD; the interaction is enhanced by H(2)O(2) treatment. Interacts with a G1/S-specific cyclin E-CDK2 complex. Interacts with AURKA, CDK5R1 (p35 form) and CDK5 and HIF1A. Isoform 1, isoform 2 and isoform 5 interact (via C-terminus region) with EP300. Interacts with the tRNA ligase SARS1; recruited to the VEGFA promoter via interaction with SARS1. Interacts with BEX4; negatively regulates alpha-tubulin deacetylation by SIRT2. Zn(2+) is required as a cofactor. In terms of processing, phosphorylated at phosphoserine and phosphothreonine. Phosphorylated at Ser-368 by a mitotic kinase CDK1/cyclin B at the G2/M transition; phosphorylation regulates the delay in cell-cycle progression. Phosphorylated at Ser-368 by a mitotic kinase G1/S-specific cyclin E/Cdk2 complex; phosphorylation inactivates SIRT2-mediated alpha-tubulin deacetylation and thereby negatively regulates cell adhesion, cell migration and neurite outgrowth during neuronal differentiation. Phosphorylated by cyclin A/Cdk2 and p35-Cdk5 complexes and to a lesser extent by the cyclin D3/Cdk4 and cyclin B/Cdk1, in vitro. Dephosphorylated at Ser-368 by CDC14A and CDC14B around early anaphase. Post-translationally, acetylated by EP300; acetylation leads both to the decreased of SIRT2-mediated alpha-tubulin deacetylase activity and SIRT2-mediated down-regulation of TP53 transcriptional activity. Ubiquitinated. Isoform 1 is expressed in heart, liver and skeletal muscle, weakly expressed in the cortex. Isoform 2 is strongly expressed in the cortex, weakly expressed in heart and liver. Weakly expressed in several malignancies including breast, liver, brain, kidney and prostate cancers compared to normal tissues. Weakly expressed in glioma cell lines compared to normal brain tissues (at protein level). Widely expressed. Highly expressed in heart, brain and skeletal muscle, while it is weakly expressed in placenta and lung. Down-regulated in many gliomas suggesting that it may act as a tumor suppressor gene in human gliomas possibly through the regulation of microtubule network.

Its subcellular location is the nucleus. The protein resides in the cytoplasm. The protein localises to the perinuclear region. It localises to the cytoskeleton. It is found in the microtubule organizing center. Its subcellular location is the centrosome. The protein resides in the centriole. The protein localises to the spindle. It localises to the midbody. It is found in the chromosome. Its subcellular location is the perikaryon. The protein resides in the cell projection. The protein localises to the growth cone. It localises to the myelin membrane. The enzyme catalyses N(6)-acetyl-L-lysyl-[protein] + NAD(+) + H2O = 2''-O-acetyl-ADP-D-ribose + nicotinamide + L-lysyl-[protein]. The catalysed reaction is N(6)-tetradecanoyl-L-lysyl-[protein] + NAD(+) + H2O = 2''-O-tetradecanoyl-ADP-D-ribose + nicotinamide + L-lysyl-[protein]. It carries out the reaction N(6)-hexadecanoyl-L-lysyl-[protein] + NAD(+) + H2O = 2''-O-hexadecanoyl-ADP-D-ribose + nicotinamide + L-lysyl-[protein]. Inhibited by Sirtinol, A3 and M15 small molecules. Inhibited by nicotinamide. Inhibited by a macrocyclic peptide inhibitor S2iL5. Inhibited by EP300-induced acetylation. In terms of biological role, NAD-dependent protein deacetylase, which deacetylates internal lysines on histone and alpha-tubulin as well as many other proteins such as key transcription factors. Participates in the modulation of multiple and diverse biological processes such as cell cycle control, genomic integrity, microtubule dynamics, cell differentiation, metabolic networks, and autophagy. Plays a major role in the control of cell cycle progression and genomic stability. Functions in the antephase checkpoint preventing precocious mitotic entry in response to microtubule stress agents, and hence allowing proper inheritance of chromosomes. Positively regulates the anaphase promoting complex/cyclosome (APC/C) ubiquitin ligase complex activity by deacetylating CDC20 and FZR1, then allowing progression through mitosis. Associates both with chromatin at transcriptional start sites (TSSs) and enhancers of active genes. Plays a role in cell cycle and chromatin compaction through epigenetic modulation of the regulation of histone H4 'Lys-20' methylation (H4K20me1) during early mitosis. Specifically deacetylates histone H4 at 'Lys-16' (H4K16ac) between the G2/M transition and metaphase enabling H4K20me1 deposition by KMT5A leading to ulterior levels of H4K20me2 and H4K20me3 deposition throughout cell cycle, and mitotic S-phase progression. Deacetylates KMT5A modulating KMT5A chromatin localization during the mitotic stress response. Also deacetylates histone H3 at 'Lys-57' (H3K56ac) during the mitotic G2/M transition. Upon bacterium Listeria monocytogenes infection, deacetylates 'Lys-18' of histone H3 in a receptor tyrosine kinase MET- and PI3K/Akt-dependent manner, thereby inhibiting transcriptional activity and promoting late stages of listeria infection. During oocyte meiosis progression, may deacetylate histone H4 at 'Lys-16' (H4K16ac) and alpha-tubulin, regulating spindle assembly and chromosome alignment by influencing microtubule dynamics and kinetochore function. Deacetylates histone H4 at 'Lys-16' (H4K16ac) at the VEGFA promoter and thereby contributes to regulate expression of VEGFA, a key regulator of angiogenesis. Deacetylates alpha-tubulin at 'Lys-40' and hence controls neuronal motility, oligodendroglial cell arbor projection processes and proliferation of non-neuronal cells. Phosphorylation at Ser-368 by a G1/S-specific cyclin E-CDK2 complex inactivates SIRT2-mediated alpha-tubulin deacetylation, negatively regulating cell adhesion, cell migration and neurite outgrowth during neuronal differentiation. Deacetylates PARD3 and participates in the regulation of Schwann cell peripheral myelination formation during early postnatal development and during postinjury remyelination. Involved in several cellular metabolic pathways. Plays a role in the regulation of blood glucose homeostasis by deacetylating and stabilizing phosphoenolpyruvate carboxykinase PCK1 activity in response to low nutrient availability. Acts as a key regulator in the pentose phosphate pathway (PPP) by deacetylating and activating the glucose-6-phosphate G6PD enzyme, and therefore, stimulates the production of cytosolic NADPH to counteract oxidative damage. Maintains energy homeostasis in response to nutrient deprivation as well as energy expenditure by inhibiting adipogenesis and promoting lipolysis. Attenuates adipocyte differentiation by deacetylating and promoting FOXO1 interaction to PPARG and subsequent repression of PPARG-dependent transcriptional activity. Plays a role in the regulation of lysosome-mediated degradation of protein aggregates by autophagy in neuronal cells. Deacetylates FOXO1 in response to oxidative stress or serum deprivation, thereby negatively regulating FOXO1-mediated autophagy. Deacetylates a broad range of transcription factors and co-regulators regulating target gene expression. Deacetylates transcriptional factor FOXO3 stimulating the ubiquitin ligase SCF(SKP2)-mediated FOXO3 ubiquitination and degradation. Deacetylates HIF1A and therefore promotes HIF1A degradation and inhibition of HIF1A transcriptional activity in tumor cells in response to hypoxia. Deacetylates RELA in the cytoplasm inhibiting NF-kappaB-dependent transcription activation upon TNF-alpha stimulation. Inhibits transcriptional activation by deacetylating p53/TP53 and EP300. Also deacetylates EIF5A. Functions as a negative regulator on oxidative stress-tolerance in response to anoxia-reoxygenation conditions. Plays a role as tumor suppressor. In addition to protein deacetylase activity, also has activity toward long-chain fatty acyl groups and mediates protein-lysine demyristoylation and depalmitoylation of target proteins, such as ARF6 and KRAS, thereby regulating their association with membranes. Functionally, deacetylates EP300, alpha-tubulin and histone H3 and H4. Lacks deacetylation activity, at least toward known SIRT2 targets. The chain is NAD-dependent protein deacetylase sirtuin-2 (SIRT2) from Homo sapiens (Human).